The primary structure comprises 1040 residues: Multidrug resistance protein MdtB (1040 aa).

Helical transmembrane passes span 16-36 (FIMRPVATTLLMVAILLAGII), 347-367 (LMMAIALVVMIIYLFLRNIPA), 369-389 (IIPGVAVPLSLIGTFAVMVFL), 396-416 (LTLMALTIATGFVVDDAIVVI), 440-460 (IGFTIISLTFSLIAVLIPLLF), 472-492 (FAITLAVAILISAVVSLTLTP), 537-557 (WLTLSVALSTLLLSVLLWVFI), 863-883 (LGSTVWLIVAAVVAMYIVLGI), 888-908 (FIHPITILSTLPTAGVGALLA), 911-931 (IAGSELDVIAIIGIILLIGIV), 968-988 (ILMTTLAALLGALPLMLSTGV), and 998-1018 (IGMVGGLIVSQVLTLFTTPVI).

This sequence belongs to the resistance-nodulation-cell division (RND) (TC 2.A.6) family. MdtB subfamily. Part of a tripartite efflux system composed of MdtA, MdtB and MdtC. MdtB forms a heteromultimer with MdtC.

The protein localises to the cell inner membrane. The MdtABC tripartite complex confers resistance against novobiocin and deoxycholate. This Escherichia coli O9:H4 (strain HS) protein is Multidrug resistance protein MdtB.